Reading from the N-terminus, the 156-residue chain is MNIVEGKLSLNGDEKVAIINARFNHIITDRLVEGARDAYLRHGGKDENLDLVLVPGAFEIPMALNRLLACSKYDAVCCLGAVIRGSTPHFDYVSAEVTKGVANVALQFAKPVAFGVLTVDSIEQAIERAGSKAGNKGFEAMVTVIELLSLYSALKN.

5-amino-6-(D-ribitylamino)uracil-binding positions include F23, 57 to 59 (AFE), and 81 to 83 (AVI). Residue 86 to 87 (ST) coordinates (2S)-2-hydroxy-3-oxobutyl phosphate. H89 (proton donor) is an active-site residue. Residue F114 coordinates 5-amino-6-(D-ribitylamino)uracil. Residue R128 coordinates (2S)-2-hydroxy-3-oxobutyl phosphate.

It belongs to the DMRL synthase family.

The enzyme catalyses (2S)-2-hydroxy-3-oxobutyl phosphate + 5-amino-6-(D-ribitylamino)uracil = 6,7-dimethyl-8-(1-D-ribityl)lumazine + phosphate + 2 H2O + H(+). Its pathway is cofactor biosynthesis; riboflavin biosynthesis; riboflavin from 2-hydroxy-3-oxobutyl phosphate and 5-amino-6-(D-ribitylamino)uracil: step 1/2. Functionally, catalyzes the formation of 6,7-dimethyl-8-ribityllumazine by condensation of 5-amino-6-(D-ribitylamino)uracil with 3,4-dihydroxy-2-butanone 4-phosphate. This is the penultimate step in the biosynthesis of riboflavin. In Sulfurospirillum multivorans (Dehalospirillum multivorans), this protein is 6,7-dimethyl-8-ribityllumazine synthase.